The following is a 415-amino-acid chain: Lipid-A-disaccharide synthase (415 aa).

The tract at residues 1-21 is disordered; it reads MNSLPESGSDGQSSADPSQKA.

It belongs to the LpxB family.

The catalysed reaction is a lipid X + a UDP-2-N,3-O-bis[(3R)-3-hydroxyacyl]-alpha-D-glucosamine = a lipid A disaccharide + UDP + H(+). It participates in bacterial outer membrane biogenesis; LPS lipid A biosynthesis. Its function is as follows. Condensation of UDP-2,3-diacylglucosamine and 2,3-diacylglucosamine-1-phosphate to form lipid A disaccharide, a precursor of lipid A, a phosphorylated glycolipid that anchors the lipopolysaccharide to the outer membrane of the cell. The polypeptide is Lipid-A-disaccharide synthase (Gluconobacter oxydans (strain 621H) (Gluconobacter suboxydans)).